A 489-amino-acid polypeptide reads, in one-letter code: Tripartite motif-containing protein 10 (489 aa).

An RING-type zinc finger spans residues 16-61 (CPICQGTLREPVTIDCGHNFCRGCLTRYCEIPGPESEESLSCPLCK). Residues 94-135 (EVEDACPEHGEKIYFFCEEDEAQLCVVCRETGQHGAHTVRFL) form a B box-type zinc finger. Zn(2+)-binding residues include C99, H102, C121, and H127. Residues 144 to 180 (EQIQKCLVCLRKEREEIQETQSRENKRIQVLLTQVAT) adopt a coiled-coil conformation. The B30.2/SPRY domain maps to 292–486 (QEMKTFLEKL…FSLSCQEGAV (195 aa)).

It belongs to the TRIM/RBCC family. In terms of assembly, interacts with IFNAR1; this interaction prevents association of IFNAR1 with TYK2. In terms of tissue distribution, expressed in embryonic liver.

The protein localises to the cytoplasm. E3 ligase that plays an essential role in the differentiation and survival of terminal erythroid cells. May directly bind to PTEN and promote its ubiquitination, resulting in its proteasomal degradation and activation of hypertrophic signaling. In addition, plays a role in immune response regulation by repressing the phosphorylation of STAT1 and STAT2 in the interferon/JAK/STAT signaling pathway independent of its E3 ligase activity. Mechanistically, interacts with the intracellular domain of IFNAR1 and thereby inhibits the association between TYK2 and IFNAR1. The polypeptide is Tripartite motif-containing protein 10 (Trim10) (Mus musculus (Mouse)).